Consider the following 179-residue polypeptide: NADH-quinone oxidoreductase subunit I (179 aa).

4Fe-4S ferredoxin-type domains lie at 49-79 and 89-118; these read LTRD…LQKG and EFFR…LTPD. The [4Fe-4S] cluster site is built by C59, C62, C65, C69, C98, C101, C104, and C108.

It belongs to the complex I 23 kDa subunit family. NDH-1 is composed of 14 different subunits. Subunits NuoA, H, J, K, L, M, N constitute the membrane sector of the complex. [4Fe-4S] cluster serves as cofactor.

It localises to the cell inner membrane. The enzyme catalyses a quinone + NADH + 5 H(+)(in) = a quinol + NAD(+) + 4 H(+)(out). In terms of biological role, NDH-1 shuttles electrons from NADH, via FMN and iron-sulfur (Fe-S) centers, to quinones in the respiratory chain. The immediate electron acceptor for the enzyme in this species is believed to be ubiquinone. Couples the redox reaction to proton translocation (for every two electrons transferred, four hydrogen ions are translocated across the cytoplasmic membrane), and thus conserves the redox energy in a proton gradient. The sequence is that of NADH-quinone oxidoreductase subunit I from Chromohalobacter salexigens (strain ATCC BAA-138 / DSM 3043 / CIP 106854 / NCIMB 13768 / 1H11).